A 292-amino-acid polypeptide reads, in one-letter code: 4-hydroxy-tetrahydrodipicolinate synthase (292 aa).

A pyruvate-binding site is contributed by Thr45. The active-site Proton donor/acceptor is Tyr133. Lys161 acts as the Schiff-base intermediate with substrate in catalysis. Ile203 lines the pyruvate pocket.

This sequence belongs to the DapA family. As to quaternary structure, homotetramer; dimer of dimers.

Its subcellular location is the cytoplasm. The catalysed reaction is L-aspartate 4-semialdehyde + pyruvate = (2S,4S)-4-hydroxy-2,3,4,5-tetrahydrodipicolinate + H2O + H(+). It participates in amino-acid biosynthesis; L-lysine biosynthesis via DAP pathway; (S)-tetrahydrodipicolinate from L-aspartate: step 3/4. Functionally, catalyzes the condensation of (S)-aspartate-beta-semialdehyde [(S)-ASA] and pyruvate to 4-hydroxy-tetrahydrodipicolinate (HTPA). The protein is 4-hydroxy-tetrahydrodipicolinate synthase of Nitrosomonas europaea (strain ATCC 19718 / CIP 103999 / KCTC 2705 / NBRC 14298).